We begin with the raw amino-acid sequence, 457 residues long: Adenylosuccinate synthetase isozyme 1 (457 aa).

Residues 1-21 (MSGTRASNDRPPGAGGVKRGR) form a disordered region. GTP is bound by residues 42-48 (GDEGKGK) and 70-72 (GHT). Asp43 (proton acceptor) is an active-site residue. Mg(2+) is bound by residues Asp43 and Gly70. Asp43 is a substrate binding site. IMP contacts are provided by residues 43 to 46 (DEGK), 68 to 71 (NAGH), Thr163, Arg177, Asn256, Thr271, and Arg335. Catalysis depends on His71, which acts as the Proton donor. 331 to 337 (VTTGRKR) provides a ligand contact to substrate. GTP contacts are provided by residues Arg337, 363–365 (KLD), and 445–448 (GVGK).

The protein belongs to the adenylosuccinate synthetase family. Homodimer. Mg(2+) serves as cofactor. In terms of tissue distribution, predominantly expressed in skeletal muscle and heart, as well as in several hematopoietic cell lines and solid tumors.

The protein localises to the cytoplasm. It catalyses the reaction IMP + L-aspartate + GTP = N(6)-(1,2-dicarboxyethyl)-AMP + GDP + phosphate + 2 H(+). It functions in the pathway purine metabolism; AMP biosynthesis via de novo pathway; AMP from IMP: step 1/2. Component of the purine nucleotide cycle (PNC), which interconverts IMP and AMP to regulate the nucleotide levels in various tissues, and which contributes to glycolysis and ammoniagenesis. Catalyzes the first committed step in the biosynthesis of AMP from IMP. This chain is Adenylosuccinate synthetase isozyme 1, found in Homo sapiens (Human).